Consider the following 868-residue polypeptide: B-cell receptor CD22 (868 aa).

The N-terminal stretch at 1-21 (MRVHYLWLLLILGHVASARYS) is a signal peptide. An Ig-like V-type domain is found at 22–148 (SANDWTVDHP…MEPIHLNVSE (127 aa)). Topologically, residues 22-708 (SANDWTVDHP…YYSPETIGKR (687 aa)) are extracellular. 3 disulfide bridges follow: C41–C177, C46–C112, and C171–C235. N-linked (GlcNAc...) asparagine glycans are attached at residues N111 and N122. Residue R130 coordinates N-acetylneuraminate. 9 N-linked (GlcNAc...) asparagine glycosylation sites follow: N145, N174, N271, N281, N384, N414, N466, N567, and N595. Ig-like C2-type domains are found at residues 153-250 (PYIQ…RTVR), 257-347 (PKLE…VELT), 352-435 (PEPS…AKLD), 440-521 (PKAV…VILN), 526-603 (PRDV…ETLS), and 614-697 (PRRL…STLT). Cystine bridges form between C278/C330, C374/C417, C463/C505, and C550/C592. C637 and C680 form a disulfide bridge. The chain crosses the membrane as a helical span at residues 709-727 (VALGLGFCLTICILAIWGM). At 728 to 868 (KIQKKWKQNR…EDVDYVTLKH (141 aa)) the chain is on the cytoplasmic side. Residues 738–752 (SQQGLQENSSGQSFF) are compositionally biased toward polar residues. The disordered stretch occupies residues 738–772 (SQQGLQENSSGQSFFVRNKKARRTPLSEGPQSQGC). Residues S746, S747, and S750 each carry the phosphoserine modification. The ITIM motif 1 signature appears at 781 to 786 (VSYAIL). Phosphotyrosine is present on Y783. Residues 790 to 812 (ESDTHNTGDAGTPATQAPPPNNS) form a disordered region. Phosphotyrosine is present on residues Y828, Y843, and Y863. 2 consecutive short sequence motifs (ITIM motif) follow at residues 841–846 (IHYSEL) and 861–866 (VDYVTL).

It belongs to the immunoglobulin superfamily. SIGLEC (sialic acid binding Ig-like lectin) family. Predominantly monomer of isoform CD22-beta. Also found as heterodimer of isoform CD22-beta and a shorter isoform. Interacts with PTPN6/SHP-1, LYN, SYK, PIK3R1/PIK3R2 and PLCG1 upon phosphorylation. Interacts with GRB2, INPP5D and SHC1 upon phosphorylation. May form a complex with INPP5D/SHIP, GRB2 and SHC1. Phosphorylated on tyrosine residues by LYN. In terms of processing, phosphorylation of Tyr-783 and Tyr-843 are involved in binding to SYK. Phosphorylation of Tyr-828 is involved in binding to GRB2. Phosphorylation of Tyr-863 is involved in binding to SYK, PLCG2 and PIK3R1/PIK3R2. B-lymphocytes.

The protein localises to the cell membrane. Functionally, most highly expressed siglec (sialic acid-binding immunoglobulin-like lectin) on B-cells that plays a role in various aspects of B-cell biology including differentiation, antigen presentation, and trafficking to bone marrow. Binds to alpha 2,6-linked sialic acid residues of surface molecules such as CD22 itself, CD45 and IgM in a cis configuration. Can also bind to ligands on other cells as an adhesion molecule in a trans configuration. Acts as an inhibitory coreceptor on the surface of B-cells and inhibits B-cell receptor induced signaling, characterized by inhibition of the calcium mobilization and cellular activation. Mechanistically, the immunoreceptor tyrosine-based inhibitory motif domain is phosphorylated by the Src kinase LYN, which in turn leads to the recruitment of the protein tyrosine phosphatase 1/PTPN6, leading to the negative regulation of BCR signaling. If this negative signaling from is of sufficient strength, apoptosis of the B-cell can be induced. The sequence is that of B-cell receptor CD22 from Mus musculus (Mouse).